A 444-amino-acid chain; its full sequence is Exodeoxyribonuclease 7 large subunit (444 aa).

It belongs to the XseA family. In terms of assembly, heterooligomer composed of large and small subunits.

The protein resides in the cytoplasm. The catalysed reaction is Exonucleolytic cleavage in either 5'- to 3'- or 3'- to 5'-direction to yield nucleoside 5'-phosphates.. Its function is as follows. Bidirectionally degrades single-stranded DNA into large acid-insoluble oligonucleotides, which are then degraded further into small acid-soluble oligonucleotides. This chain is Exodeoxyribonuclease 7 large subunit, found in Rickettsia akari (strain Hartford).